The following is a 312-amino-acid chain: 2,3-dihydroxyphenylpropionate/2,3-dihydroxicinnamic acid 1,2-dioxygenase (312 aa).

H115 (proton donor) is an active-site residue. H179 (proton acceptor) is an active-site residue.

It belongs to the LigB/MhpB extradiol dioxygenase family. Homotetramer. Requires Fe(2+) as cofactor.

It catalyses the reaction 3-(2,3-dihydroxyphenyl)propanoate + O2 = (2Z,4E)-2-hydroxy-6-oxonona-2,4-dienedioate + H(+). The enzyme catalyses (2E)-3-(2,3-dihydroxyphenyl)prop-2-enoate + O2 = (2Z,4E,7E)-2-hydroxy-6-oxonona-2,4,7-trienedioate + H(+). Its pathway is aromatic compound metabolism; 3-phenylpropanoate degradation. Its function is as follows. Catalyzes the non-heme iron(II)-dependent oxidative cleavage of 2,3-dihydroxyphenylpropionic acid and 2,3-dihydroxicinnamic acid into 2-hydroxy-6-ketononadienedioate and 2-hydroxy-6-ketononatrienedioate, respectively. The sequence is that of 2,3-dihydroxyphenylpropionate/2,3-dihydroxicinnamic acid 1,2-dioxygenase from Azotobacter vinelandii (strain DJ / ATCC BAA-1303).